Here is a 463-residue protein sequence, read N- to C-terminus: UDP-N-acetylmuramoyl-L-alanyl-D-glutamate--2,6-diaminopimelate ligase (463 aa).

UDP-N-acetyl-alpha-D-muramoyl-L-alanyl-D-glutamate is bound at residue threonine 21. An ATP-binding site is contributed by 94-100 (GTNGKTT). UDP-N-acetyl-alpha-D-muramoyl-L-alanyl-D-glutamate-binding positions include 137-138 (TT), serine 164, glutamine 170, and arginine 172. Lysine 204 is modified (N6-carboxylysine). Meso-2,6-diaminopimelate-binding positions include arginine 358, 382 to 385 (DNPR), glycine 433, and glutamate 437. Positions 382–385 (DNPR) match the Meso-diaminopimelate recognition motif motif.

It belongs to the MurCDEF family. MurE subfamily. Mg(2+) is required as a cofactor. Carboxylation is probably crucial for Mg(2+) binding and, consequently, for the gamma-phosphate positioning of ATP.

The protein localises to the cytoplasm. It catalyses the reaction UDP-N-acetyl-alpha-D-muramoyl-L-alanyl-D-glutamate + meso-2,6-diaminopimelate + ATP = UDP-N-acetyl-alpha-D-muramoyl-L-alanyl-gamma-D-glutamyl-meso-2,6-diaminopimelate + ADP + phosphate + H(+). It functions in the pathway cell wall biogenesis; peptidoglycan biosynthesis. Its function is as follows. Catalyzes the addition of meso-diaminopimelic acid to the nucleotide precursor UDP-N-acetylmuramoyl-L-alanyl-D-glutamate (UMAG) in the biosynthesis of bacterial cell-wall peptidoglycan. This Helicobacter hepaticus (strain ATCC 51449 / 3B1) protein is UDP-N-acetylmuramoyl-L-alanyl-D-glutamate--2,6-diaminopimelate ligase.